The primary structure comprises 473 residues: MKTLYSLRRFYHVETPFNSNVGIAGRDIESTGFAWWSGNSRLINVSGKLLGAHVAHAGLMVFWCGAMTLFEVAHYIPEKPLYEQGLILLPHLATLGWGVGPGGEIIDVYPYFVVGVLHLISSAVLGFGGVYHSLIGPDTLEESFPAFGYDWRDKNKITTILGIHLVILGFGALLLVIKAIYVGGLYDTWAPGGGDVRIIDNPTLNPAVIFGYVLKSPWGGDGWIVSVNNMEDVVGGHIWIGFTCIAGGFWHILTKPFAWARRAYVWSGEAYLSYSLVAVSLMAFIASQYAWYNNTVYPSEFYGPTGPEASQSQAFTFLVRDQRLGASVSSAQGPTGLGKYLMRSPSGEIILGGETQRFWDLRAPWIEPLRGPNGLDLNKIKNDIQPWQERRAAEYMTHAPLGSLNSVGGVATEINSVNYVSPRSWLTTSHFFLGFAFYIGHLWHAGRARAAAAGFEKGINRENEPVLTLRPID.

Residues 1–14 constitute a propeptide that is removed on maturation; the sequence is MKTLYSLRRFYHVE. N-acetylthreonine is present on Thr-15. A Phosphothreonine modification is found at Thr-15. Transmembrane regions (helical) follow at residues 69-93, 134-155, 178-200, 255-275, and 291-312; these read LFEV…PHLA, LIGP…RDKN, KAIY…RIID, KPFA…LSYS, and WYNN…ASQS. Glu-367 contributes to the [CaMn4O5] cluster binding site. A helical membrane pass occupies residues 447–471; it reads RARAAAAGFEKGINRENEPVLTLRP.

It belongs to the PsbB/PsbC family. PsbC subfamily. PSII is composed of 1 copy each of membrane proteins PsbA, PsbB, PsbC, PsbD, PsbE, PsbF, PsbH, PsbI, PsbJ, PsbK, PsbL, PsbM, PsbT, PsbX, PsbY, PsbZ, Psb30/Ycf12, at least 3 peripheral proteins of the oxygen-evolving complex and a large number of cofactors. It forms dimeric complexes. It depends on Binds multiple chlorophylls and provides some of the ligands for the Ca-4Mn-5O cluster of the oxygen-evolving complex. It may also provide a ligand for a Cl- that is required for oxygen evolution. PSII binds additional chlorophylls, carotenoids and specific lipids. as a cofactor.

It is found in the plastid. It localises to the chloroplast thylakoid membrane. In terms of biological role, one of the components of the core complex of photosystem II (PSII). It binds chlorophyll and helps catalyze the primary light-induced photochemical processes of PSII. PSII is a light-driven water:plastoquinone oxidoreductase, using light energy to abstract electrons from H(2)O, generating O(2) and a proton gradient subsequently used for ATP formation. The sequence is that of Photosystem II CP43 reaction center protein from Guillardia theta (Cryptophyte).